The primary structure comprises 367 residues: Leucine-rich repeat-containing protein 28 (367 aa).

LRR repeat units lie at residues lysine 16–lysine 36, tyrosine 42–lysine 63, asparagine 66–leucine 87, lysine 89–lysine 111, serine 112–leucine 133, glutamate 135–cysteine 156, serine 158–leucine 179, serine 181–serine 202, and glutamate 204–lysine 226.

In Xenopus tropicalis (Western clawed frog), this protein is Leucine-rich repeat-containing protein 28 (lrrc28).